A 414-amino-acid chain; its full sequence is Serine hydroxymethyltransferase (414 aa).

(6S)-5,6,7,8-tetrahydrofolate is bound by residues L116 and 120-122; that span reads GHL. Residue K224 is modified to N6-(pyridoxal phosphate)lysine. Residue 348–350 participates in (6S)-5,6,7,8-tetrahydrofolate binding; that stretch reads SPF.

Belongs to the SHMT family. As to quaternary structure, homodimer. Pyridoxal 5'-phosphate is required as a cofactor.

It is found in the cytoplasm. It carries out the reaction (6R)-5,10-methylene-5,6,7,8-tetrahydrofolate + glycine + H2O = (6S)-5,6,7,8-tetrahydrofolate + L-serine. It participates in one-carbon metabolism; tetrahydrofolate interconversion. It functions in the pathway amino-acid biosynthesis; glycine biosynthesis; glycine from L-serine: step 1/1. In terms of biological role, catalyzes the reversible interconversion of serine and glycine with tetrahydrofolate (THF) serving as the one-carbon carrier. This reaction serves as the major source of one-carbon groups required for the biosynthesis of purines, thymidylate, methionine, and other important biomolecules. Also exhibits THF-independent aldolase activity toward beta-hydroxyamino acids, producing glycine and aldehydes, via a retro-aldol mechanism. The sequence is that of Serine hydroxymethyltransferase from Campylobacter jejuni subsp. doylei (strain ATCC BAA-1458 / RM4099 / 269.97).